We begin with the raw amino-acid sequence, 268 residues long: Ribosomal RNA small subunit methyltransferase A (268 aa).

Residues N16, L18, G43, E64, D89, and N110 each coordinate S-adenosyl-L-methionine.

It belongs to the class I-like SAM-binding methyltransferase superfamily. rRNA adenine N(6)-methyltransferase family. RsmA subfamily.

The protein localises to the cytoplasm. It carries out the reaction adenosine(1518)/adenosine(1519) in 16S rRNA + 4 S-adenosyl-L-methionine = N(6)-dimethyladenosine(1518)/N(6)-dimethyladenosine(1519) in 16S rRNA + 4 S-adenosyl-L-homocysteine + 4 H(+). Specifically dimethylates two adjacent adenosines (A1518 and A1519) in the loop of a conserved hairpin near the 3'-end of 16S rRNA in the 30S particle. May play a critical role in biogenesis of 30S subunits. This Pseudomonas syringae pv. tomato (strain ATCC BAA-871 / DC3000) protein is Ribosomal RNA small subunit methyltransferase A.